A 670-amino-acid chain; its full sequence is DNA topoisomerase 6 subunit B (670 aa).

Positions 1–30 (MAGDDLVETKKGSSKNSKDSNESKLKQKSP) are disordered. The span at 7 to 25 (VETKKGSSKNSKDSNESKL) shows a compositional bias: basic and acidic residues. Residues Asn60, Asp160, 181 to 182 (TK), 190 to 197 (GKFGLGAK), and Lys516 each bind ATP.

It belongs to the TOP6B family. Homodimer. Heterotetramer of two TOP6A and two TOP6B subunits. Interacts with SPO11-2, but not with SPO11-1, RHL1 or BIN4. As to expression, highly expressed in leaves, stems, flowers and seedlings.

It localises to the nucleus. The catalysed reaction is ATP-dependent breakage, passage and rejoining of double-stranded DNA.. In terms of biological role, component of the DNA topoisomerase VI involved in chromatin organization and progression of endoreduplication cycles. Relaxes both positive and negative superturns and exhibits a strong decatenase activity. The B subunit binds ATP. Involved in cell-elongation processes. The protein is DNA topoisomerase 6 subunit B of Arabidopsis thaliana (Mouse-ear cress).